The chain runs to 468 residues: Ribulose bisphosphate carboxylase large chain (468 aa).

Lysine 5 carries the post-translational modification N6,N6,N6-trimethyllysine. Residues asparagine 114 and threonine 164 each contribute to the substrate site. Residue lysine 166 is the Proton acceptor of the active site. Lysine 168 serves as a coordination point for substrate. Lysine 192, aspartate 194, and glutamate 195 together coordinate Mg(2+). Lysine 192 bears the N6-carboxylysine mark. Catalysis depends on histidine 285, which acts as the Proton acceptor. Substrate contacts are provided by arginine 286, histidine 318, and serine 370.

Belongs to the RuBisCO large chain family. Type I subfamily. In terms of assembly, heterohexadecamer of 8 large chains and 8 small chains; disulfide-linked. The disulfide link is formed within the large subunit homodimers. Mg(2+) is required as a cofactor. In terms of processing, the disulfide bond which can form in the large chain dimeric partners within the hexadecamer appears to be associated with oxidative stress and protein turnover.

It localises to the plastid. The protein resides in the chloroplast. It carries out the reaction 2 (2R)-3-phosphoglycerate + 2 H(+) = D-ribulose 1,5-bisphosphate + CO2 + H2O. It catalyses the reaction D-ribulose 1,5-bisphosphate + O2 = 2-phosphoglycolate + (2R)-3-phosphoglycerate + 2 H(+). Functionally, ruBisCO catalyzes two reactions: the carboxylation of D-ribulose 1,5-bisphosphate, the primary event in carbon dioxide fixation, as well as the oxidative fragmentation of the pentose substrate in the photorespiration process. Both reactions occur simultaneously and in competition at the same active site. The chain is Ribulose bisphosphate carboxylase large chain from Solandra grandiflora (Chalice vine).